The following is a 193-amino-acid chain: Dual-action ribosomal maturation protein DarP (193 aa).

Over residues methionine 1–glutamate 10 the composition is skewed to basic and acidic residues. Disordered regions lie at residues methionine 1–arginine 20 and glutamine 171–glutamate 193. Residues glycine 181–glutamate 193 are compositionally biased toward acidic residues.

The protein belongs to the DarP family.

The protein localises to the cytoplasm. In terms of biological role, member of a network of 50S ribosomal subunit biogenesis factors which assembles along the 30S-50S interface, preventing incorrect 23S rRNA structures from forming. Promotes peptidyl transferase center (PTC) maturation. The protein is Dual-action ribosomal maturation protein DarP of Xanthomonas oryzae pv. oryzae (strain KACC10331 / KXO85).